A 1037-amino-acid chain; its full sequence is Probable inorganic carbon transporter subunit DabA 1 (1037 aa).

4 residues coordinate Zn(2+): C460, D462, H719, and C734.

Belongs to the inorganic carbon transporter (TC 9.A.2) DabA family. In terms of assembly, forms a complex with DabB. Zn(2+) is required as a cofactor.

It is found in the cell inner membrane. In terms of biological role, part of an energy-coupled inorganic carbon pump. The chain is Probable inorganic carbon transporter subunit DabA 1 from Nitrobacter winogradskyi (strain ATCC 25391 / DSM 10237 / CIP 104748 / NCIMB 11846 / Nb-255).